A 75-amino-acid chain; its full sequence is UPF0352 protein YPTB1297 (75 aa).

It belongs to the UPF0352 family.

In Yersinia pseudotuberculosis serotype I (strain IP32953), this protein is UPF0352 protein YPTB1297.